Here is a 367-residue protein sequence, read N- to C-terminus: Biotin synthase (367 aa).

The 236-residue stretch at Cys73–Arg308 folds into the Radical SAM core domain. [4Fe-4S] cluster-binding residues include Cys91, Cys95, and Cys98. [2Fe-2S] cluster contacts are provided by Cys136, Cys173, Cys233, and Arg303.

The protein belongs to the radical SAM superfamily. Biotin synthase family. In terms of assembly, homodimer. [4Fe-4S] cluster serves as cofactor. Requires [2Fe-2S] cluster as cofactor.

The catalysed reaction is (4R,5S)-dethiobiotin + (sulfur carrier)-SH + 2 reduced [2Fe-2S]-[ferredoxin] + 2 S-adenosyl-L-methionine = (sulfur carrier)-H + biotin + 2 5'-deoxyadenosine + 2 L-methionine + 2 oxidized [2Fe-2S]-[ferredoxin]. The protein operates within cofactor biosynthesis; biotin biosynthesis; biotin from 7,8-diaminononanoate: step 2/2. Functionally, catalyzes the conversion of dethiobiotin (DTB) to biotin by the insertion of a sulfur atom into dethiobiotin via a radical-based mechanism. This Picosynechococcus sp. (strain ATCC 27264 / PCC 7002 / PR-6) (Agmenellum quadruplicatum) protein is Biotin synthase.